A 414-amino-acid chain; its full sequence is Probable protein phosphatase 2C 9 (414 aa).

A helical transmembrane segment spans residues 15–37 (TATAAVAAAVSASAAAAVSSAID). A disordered region spans residues 56–95 (LQAGEDGRPGKRQRLARTASGAPRPDEDSASERPSCGRTE). Residues 99–410 (RYGVTAVCGR…DNVSVVVVDL (312 aa)) form the PPM-type phosphatase domain. Aspartate 136 and glycine 137 together coordinate Mn(2+). Basic and acidic residues predominate over residues 186–195 (GNRASTRSDD). The interval 186-212 (GNRASTRSDDEPACPCEQQTPSRRDHA) is disordered. Aspartate 319 is a binding site for Mn(2+). The disordered stretch occupies residues 345–372 (APAARPSGVPSSAEAAETENGGAASVKG). The segment covering 355–369 (SSAEAAETENGGAAS) has biased composition (low complexity). Aspartate 401 serves as a coordination point for Mn(2+).

The protein belongs to the PP2C family. Mg(2+) is required as a cofactor. Requires Mn(2+) as cofactor.

Its subcellular location is the membrane. The catalysed reaction is O-phospho-L-seryl-[protein] + H2O = L-seryl-[protein] + phosphate. The enzyme catalyses O-phospho-L-threonyl-[protein] + H2O = L-threonyl-[protein] + phosphate. The chain is Probable protein phosphatase 2C 9 from Oryza sativa subsp. japonica (Rice).